Here is a 397-residue protein sequence, read N- to C-terminus: Polygalacturonase (397 aa).

Positions 1–22 (MGSYLGIYTILVLCLLGYSANA) are cleaved as a signal peptide. PbH1 repeat units lie at residues 169-195 (GKNMTFDNIKIIAPAESPNTDGIHLGR), 196-217 (CEGVKILNTKIATGDDCISVGD), 219-239 (MKNLLIEKVVCGPGHGISVGS), and 249-270 (VTDITVKNCTLEGTSNGLRIKT). N-linked (GlcNAc...) asparagine glycosylation is present at Asn-171. Catalysis depends on Asp-210, which acts as the Proton donor. Residues Cys-212 and Cys-229 are joined by a disulfide bond. His-233 is a catalytic residue. A glycan (N-linked (GlcNAc...) asparagine) is linked at Asn-256. 2 disulfides stabilise this stretch: Cys-341–Cys-347 and Cys-370–Cys-386.

It belongs to the glycosyl hydrolase 28 family. Pollen.

It is found in the secreted. The protein localises to the cell wall. The catalysed reaction is (1,4-alpha-D-galacturonosyl)n+m + H2O = (1,4-alpha-D-galacturonosyl)n + (1,4-alpha-D-galacturonosyl)m.. May function in depolymerizing pectin during pollen development, germination, and tube growth. The protein is Polygalacturonase of Brassica napus (Rape).